The sequence spans 172 residues: Lectin (172 aa).

Positions 1 to 20 (MVWCLADLRAYVLVLLVISG) are cleaved as a signal peptide. The C-type lectin domain maps to 36-172 (DCTPGWDCHF…ICKYTTPCRY (137 aa)). Intrachain disulfides connect C65-C164 and C140-C156. A glycan (N-linked (GlcNAc...) asparagine) is linked at N93.

As to quaternary structure, heterodimer. As to expression, anterior part of oviduct.

The protein resides in the secreted. Its function is as follows. May be involved in protection of eggs and embryos against microorganisms. Calcium-dependent lectin with specificity to D-glucose and D-glucosamine. Can agglutinate microorganisms in vivo. This is Lectin (LEC) from Pleurodeles waltl (Iberian ribbed newt).